The sequence spans 261 residues: Ribonuclease HII (261 aa).

Positions 71–259 (KYIAGVDEVG…VKEAKLHFDS (189 aa)) constitute an RNase H type-2 domain. A divalent metal cation-binding residues include Asp77, Glu78, and Asp169.

The protein belongs to the RNase HII family. Mn(2+) is required as a cofactor. It depends on Mg(2+) as a cofactor.

It localises to the cytoplasm. It catalyses the reaction Endonucleolytic cleavage to 5'-phosphomonoester.. Endonuclease that specifically degrades the RNA of RNA-DNA hybrids. The protein is Ribonuclease HII of Listeria monocytogenes serotype 4b (strain F2365).